The chain runs to 426 residues: Tetracenomycin polyketide synthase ketoacyl synthase alpha subunit (426 aa).

Positions 6–420 constitute a Ketosynthase family 3 (KS3) domain; sequence EKRVVITGIG…GFQSAAVLAR (415 aa). Catalysis depends on for beta-ketoacyl synthase activity residues cysteine 173, histidine 313, and histidine 350.

Belongs to the thiolase-like superfamily. Beta-ketoacyl-ACP synthases family. In terms of assembly, the tetracenomycin polyketide synthase (TCM PKS) is composed of a ketosynthase complex (TcmKL), an acyl carrier protein (TcmM), a cyclase (TcmN) and a probable second cyclase (TcmJ). TcmK and TcmL form a heterodimeric complex.

It carries out the reaction 10 malonyl-CoA + 8 H(+) = tetracenomycin F2 + 10 CO2 + 10 CoA + 2 H2O. It functions in the pathway antibiotic biosynthesis; tetracenomycin C biosynthesis. Involved in the biosynthesis of tetracenomycin C (TCM C). Part of a type II polyketide synthase (PKS) that catalyzes the synthesis of tetracenomycin F2 (TCM F2), a precursor of TCM C, from malonyl-CoA. TcmK and TcmL form a heterodimeric alpha-beta complex that catalyzes the condensation reactions between the growing acyl-enzyme chain and the malonyl-CoA extender units. The chain is Tetracenomycin polyketide synthase ketoacyl synthase alpha subunit from Streptomyces glaucescens.